Consider the following 133-residue polypeptide: UPF0102 protein Anae109_1947 (133 aa).

Belongs to the UPF0102 family.

In Anaeromyxobacter sp. (strain Fw109-5), this protein is UPF0102 protein Anae109_1947.